The chain runs to 357 residues: Glutamate 5-kinase (357 aa).

K7 is an ATP binding site. Substrate is bound by residues S43, D130, and N142. 162–163 (TD) serves as a coordination point for ATP. A PUA domain is found at 270 to 347 (QGELTLDAGA…PAAGPSPVVV (78 aa)).

Belongs to the glutamate 5-kinase family.

The protein localises to the cytoplasm. It carries out the reaction L-glutamate + ATP = L-glutamyl 5-phosphate + ADP. It functions in the pathway amino-acid biosynthesis; L-proline biosynthesis; L-glutamate 5-semialdehyde from L-glutamate: step 1/2. Catalyzes the transfer of a phosphate group to glutamate to form L-glutamate 5-phosphate. This chain is Glutamate 5-kinase, found in Parasynechococcus marenigrum (strain WH8102).